Here is a 668-residue protein sequence, read N- to C-terminus: UvrABC system protein B (668 aa).

The region spanning 27–413 is the Helicase ATP-binding domain; that stretch reads AGVQAGHRFQ…STQVVEQIIR (387 aa). ATP is bound at residue 40-47; sequence GATGTGKT. A Beta-hairpin motif is present at residues 93-116; that stretch reads YYDYYQPEAYIPVTDTYIEKSASI. Residues 430–596 enclose the Helicase C-terminal domain; that stretch reads QVDDLYGEIR…PIVKKTSNAI (167 aa). Residues 628 to 663 form the UVR domain; that stretch reads PPLIQDLEAKMKAAAQELAFEEAARYRDQIKRLRDR.

It belongs to the UvrB family. As to quaternary structure, forms a heterotetramer with UvrA during the search for lesions. Interacts with UvrC in an incision complex.

It localises to the cytoplasm. In terms of biological role, the UvrABC repair system catalyzes the recognition and processing of DNA lesions. A damage recognition complex composed of 2 UvrA and 2 UvrB subunits scans DNA for abnormalities. Upon binding of the UvrA(2)B(2) complex to a putative damaged site, the DNA wraps around one UvrB monomer. DNA wrap is dependent on ATP binding by UvrB and probably causes local melting of the DNA helix, facilitating insertion of UvrB beta-hairpin between the DNA strands. Then UvrB probes one DNA strand for the presence of a lesion. If a lesion is found the UvrA subunits dissociate and the UvrB-DNA preincision complex is formed. This complex is subsequently bound by UvrC and the second UvrB is released. If no lesion is found, the DNA wraps around the other UvrB subunit that will check the other stand for damage. The polypeptide is UvrABC system protein B (Thermosynechococcus vestitus (strain NIES-2133 / IAM M-273 / BP-1)).